The sequence spans 89 residues: Small ribosomal subunit protein bS20 (89 aa).

The tract at residues 1–21 (MANSAQAKKRARQNVKARKHN) is disordered. Residues 7–21 (AKKRARQNVKARKHN) show a composition bias toward basic residues.

Belongs to the bacterial ribosomal protein bS20 family.

Its function is as follows. Binds directly to 16S ribosomal RNA. This Acinetobacter baylyi (strain ATCC 33305 / BD413 / ADP1) protein is Small ribosomal subunit protein bS20.